The following is a 217-amino-acid chain: 7-cyano-7-deazaguanine synthase (217 aa).

ATP is bound at residue 10–20; sequence FSGGQDSTTCL. Zn(2+)-binding residues include Cys185, Cys194, Cys197, and Cys200.

Belongs to the QueC family. As to quaternary structure, homodimer. It depends on Zn(2+) as a cofactor.

It carries out the reaction 7-carboxy-7-deazaguanine + NH4(+) + ATP = 7-cyano-7-deazaguanine + ADP + phosphate + H2O + H(+). The protein operates within purine metabolism; 7-cyano-7-deazaguanine biosynthesis. Its function is as follows. Catalyzes the ATP-dependent conversion of 7-carboxy-7-deazaguanine (CDG) to 7-cyano-7-deazaguanine (preQ(0)). This Streptococcus thermophilus (strain ATCC BAA-491 / LMD-9) protein is 7-cyano-7-deazaguanine synthase.